A 219-amino-acid chain; its full sequence is PKHD-type hydroxylase SYNPCC7002_A2658 (219 aa).

In terms of domain architecture, Fe2OG dioxygenase spans 78–172 (TVHTLLFSRY…RLVAVGWVQS (95 aa)). His-96, Asp-98, and His-153 together coordinate Fe cation. Arg-163 provides a ligand contact to 2-oxoglutarate.

Fe(2+) is required as a cofactor. L-ascorbate serves as cofactor.

The protein is PKHD-type hydroxylase SYNPCC7002_A2658 of Picosynechococcus sp. (strain ATCC 27264 / PCC 7002 / PR-6) (Agmenellum quadruplicatum).